Consider the following 178-residue polypeptide: Gamma-crystallin S (178 aa).

Ser2 carries the post-translational modification N-acetylserine. An N-terminal arm region spans residues 2–5; that stretch reads SKTG. 2 consecutive Beta/gamma crystallin 'Greek key' domains span residues 6 to 44 and 45 to 87; these read AKIS…RVEG and GTWA…RAVH. Positions 88–93 are connecting peptide; that stretch reads LSSGGQ. Beta/gamma crystallin 'Greek key' domains follow at residues 94-134 and 135-177; these read YKIQ…KVLE and GTWI…RRIV.

The protein belongs to the beta/gamma-crystallin family. As to quaternary structure, monomer.

In terms of biological role, crystallins are the dominant structural components of the vertebrate eye lens. This is Gamma-crystallin S (Crygs) from Rattus norvegicus (Rat).